An 86-amino-acid chain; its full sequence is Large ribosomal subunit protein bL27 (86 aa).

This sequence belongs to the bacterial ribosomal protein bL27 family.

This is Large ribosomal subunit protein bL27 from Koribacter versatilis (strain Ellin345).